The primary structure comprises 200 residues: Holliday junction branch migration complex subunit RuvA (200 aa).

The interval 1–63 (MFEYLTGLIT…EDAITLFGFA (63 aa)) is domain I. The domain II stretch occupies residues 64–142 (TQAEKRLFTQ…AVQDEVQLDF (79 aa)). The flexible linker stretch occupies residues 143–151 (TAPGPLGPS). Positions 151–200 (SAALQDALAALESLGYTTKQVERVQKQLEGLQGELSTNDYLSQGLKLLSR) are domain III.

Belongs to the RuvA family. Homotetramer. Forms an RuvA(8)-RuvB(12)-Holliday junction (HJ) complex. HJ DNA is sandwiched between 2 RuvA tetramers; dsDNA enters through RuvA and exits via RuvB. An RuvB hexamer assembles on each DNA strand where it exits the tetramer. Each RuvB hexamer is contacted by two RuvA subunits (via domain III) on 2 adjacent RuvB subunits; this complex drives branch migration. In the full resolvosome a probable DNA-RuvA(4)-RuvB(12)-RuvC(2) complex forms which resolves the HJ.

The protein resides in the cytoplasm. Its function is as follows. The RuvA-RuvB-RuvC complex processes Holliday junction (HJ) DNA during genetic recombination and DNA repair, while the RuvA-RuvB complex plays an important role in the rescue of blocked DNA replication forks via replication fork reversal (RFR). RuvA specifically binds to HJ cruciform DNA, conferring on it an open structure. The RuvB hexamer acts as an ATP-dependent pump, pulling dsDNA into and through the RuvAB complex. HJ branch migration allows RuvC to scan DNA until it finds its consensus sequence, where it cleaves and resolves the cruciform DNA. The sequence is that of Holliday junction branch migration complex subunit RuvA from Limosilactobacillus fermentum (strain NBRC 3956 / LMG 18251) (Lactobacillus fermentum).